A 1188-amino-acid polypeptide reads, in one-letter code: Spermatogenesis-associated protein 31C1 (1188 aa).

A helical membrane pass occupies residues 23–43 (PWVLDIFLTLVFALGLFFLLL). 8 disordered regions span residues 57–92 (PSPRKRKRHLVSQRHLVSQCPTGRRGRPRGRMKNHS), 121–249 (LEKG…LLTP), 483–510 (PGTSQAKGKPRPWQSSTSTGESSKEAQT), 530–567 (TPQNLSRGMESFPGKVLGATSEESERNLRKPLRSDSGS), 733–813 (MPER…PTVP), 934–1013 (NMGH…PSIS), 1121–1143 (QQATLKNQSRPNRDRQIRDQQPL), and 1155–1188 (LRHPQLLLPKKAVSPVSPPQHRPKTPSASSHHHH). Composition is skewed to basic residues over residues 59–68 (PRKRKRHLVS) and 80–92 (RRGRPRGRMKNHS). Residues 138–154 (VGKRTPDGASRSSHEPM) show a composition bias toward basic and acidic residues. The segment covering 191–207 (SSLSASQPPEPSLLLER) has biased composition (low complexity). Pro residues predominate over residues 210 to 241 (PEPPALFPHPPHTPDPLACSPPPPKGFTPPPL). A compositionally biased stretch (polar residues) spans 495–510 (WQSSTSTGESSKEAQT). Composition is skewed to polar residues over residues 783–800 (LKGSTQQSRSLGAQSSRA) and 943–954 (PNCQGSCKSQSP). Basic and acidic residues predominate over residues 960–976 (HKRENSRKPNLEKHEEM). A compositionally biased stretch (polar residues) spans 1121 to 1130 (QQATLKNQSR).

It belongs to the SPATA31 family.

It is found in the membrane. Its function is as follows. May play a role in spermatogenesis. The polypeptide is Spermatogenesis-associated protein 31C1 (SPATA31C1) (Homo sapiens (Human)).